A 185-amino-acid polypeptide reads, in one-letter code: MWMETAVIGGGCFWCVEAVLRELNGVASIRPGYAGGHTANPTYKEVCTGTTFHAEVVEVTFDPAILSYVDLLRIFLTIHDPTTPNRQGADVGTQYRSVIMPASTEQENAARGVLAEVEAAQIWQAPLSTTIEPLQIFYPAEPEHVDYFARHPEAAYCQAVIAPKVRAFRKHAADHVRANISPNHA.

C12 is an active-site residue.

The protein belongs to the MsrA Met sulfoxide reductase family.

The enzyme catalyses L-methionyl-[protein] + [thioredoxin]-disulfide + H2O = L-methionyl-(S)-S-oxide-[protein] + [thioredoxin]-dithiol. It carries out the reaction [thioredoxin]-disulfide + L-methionine + H2O = L-methionine (S)-S-oxide + [thioredoxin]-dithiol. Functionally, has an important function as a repair enzyme for proteins that have been inactivated by oxidation. Catalyzes the reversible oxidation-reduction of methionine sulfoxide in proteins to methionine. This Granulibacter bethesdensis (strain ATCC BAA-1260 / CGDNIH1) protein is Peptide methionine sulfoxide reductase MsrA.